We begin with the raw amino-acid sequence, 255 residues long: Large ribosomal subunit protein eL8 (255 aa).

Residues 1-16 show a composition bias toward basic residues; the sequence is MPKAPKKITKPKKAEK. The tract at residues 1-28 is disordered; that stretch reads MPKAPKKITKPKKAEKKKNPLFQAKPRS.

Belongs to the eukaryotic ribosomal protein eL8 family.

This Tetrahymena thermophila protein is Large ribosomal subunit protein eL8 (RPL7A).